We begin with the raw amino-acid sequence, 557 residues long: Potassium-transporting ATPase potassium-binding subunit (557 aa).

12 helical membrane-spanning segments follow: residues 5 to 25, 63 to 83, 132 to 152, 170 to 190, 253 to 273, 283 to 303, 329 to 349, 356 to 376, 379 to 399, 416 to 436, 484 to 504, and 526 to 546; these read GFLLIATFLLVLMVLARPLGS, LCAILGLNMLGLAVLFFMLLG, GLTVQNFLSAASGIAVIFALI, LLRITLWVLVPVALVIALFFI, FVQMLAIFLIPTALCFAFGEV, LLWAMSVIFVICVGVVMWAEV, VLVSSLFAVVTTAASCGAVIA, ALGGMVPMWLMQIGEVVFGGV, GLYGMMLFVLLAVFIAGLMIG, LTALAILVTPTLVLMGAALAM, LLAFCMFVGRFGVIIPVMAIA, and LFVGLLIGTVLLVGALTFIPA.

It belongs to the KdpA family. The system is composed of three essential subunits: KdpA, KdpB and KdpC.

It localises to the cell inner membrane. Functionally, part of the high-affinity ATP-driven potassium transport (or Kdp) system, which catalyzes the hydrolysis of ATP coupled with the electrogenic transport of potassium into the cytoplasm. This subunit binds the periplasmic potassium ions and delivers the ions to the membrane domain of KdpB through an intramembrane tunnel. In Escherichia coli O157:H7, this protein is Potassium-transporting ATPase potassium-binding subunit.